The chain runs to 251 residues: uncharacterized protein (251 aa).

A run of 5 helical transmembrane segments spans residues 22-42 (FLGV…DIVI), 86-106 (FFLS…VILA), 120-140 (LASS…AGIV), 157-177 (LGYF…IPYV), and 205-225 (IVAW…SFLA).

It is found in the cell membrane. This is an uncharacterized protein from Mycoplasma pneumoniae (strain ATCC 29342 / M129 / Subtype 1) (Mycoplasmoides pneumoniae).